The sequence spans 335 residues: MATKVVLDFEKPLFELEAKLDEMRQCLRNSTREQSPSETEMLNHDIETLELKVDALRRSIYKNLTRWQKVQLARHPARPYTLDYIHLMTRDFLELAGDRRYSDDKAIIGGFARIEESATGFSQPVMIIGHQKGRDTKSNLYRNFGMAQPEGYRKALRLMQLAEKFRKPVITLIDTPGAFPGIEAEERGTAEAIARNLYEMAKLTVPVICVIIGEGASGGAIGIGVGDRILMAENSWYSVISPESCSSILWRSWKYKEQAAEALQLTAVDLLSQGIIDRIIPEPVGGAHTDPDVMAATLKEILIEELKALLPKDPATLVHERIEKFSSMGVWNEEE.

The CoA carboxyltransferase C-terminal domain occupies 48–308 (TLELKVDALR…KEILIEELKA (261 aa)).

This sequence belongs to the AccA family. In terms of assembly, acetyl-CoA carboxylase is a heterohexamer composed of biotin carboxyl carrier protein (AccB), biotin carboxylase (AccC) and two subunits each of ACCase subunit alpha (AccA) and ACCase subunit beta (AccD).

The protein resides in the cytoplasm. It catalyses the reaction N(6)-carboxybiotinyl-L-lysyl-[protein] + acetyl-CoA = N(6)-biotinyl-L-lysyl-[protein] + malonyl-CoA. It participates in lipid metabolism; malonyl-CoA biosynthesis; malonyl-CoA from acetyl-CoA: step 1/1. Component of the acetyl coenzyme A carboxylase (ACC) complex. First, biotin carboxylase catalyzes the carboxylation of biotin on its carrier protein (BCCP) and then the CO(2) group is transferred by the carboxyltransferase to acetyl-CoA to form malonyl-CoA. This is Acetyl-coenzyme A carboxylase carboxyl transferase subunit alpha from Pelodictyon phaeoclathratiforme (strain DSM 5477 / BU-1).